The sequence spans 31 residues: MPIITSYFGFLLTALTIASALFIGLSKIRLI.

Residues isoleucine 3–isoleucine 23 traverse the membrane as a helical segment.

Belongs to the PetL family. In terms of assembly, the 4 large subunits of the cytochrome b6-f complex are cytochrome b6, subunit IV (17 kDa polypeptide, PetD), cytochrome f and the Rieske protein, while the 4 small subunits are PetG, PetL, PetM and PetN. The complex functions as a dimer.

It is found in the plastid. It localises to the chloroplast thylakoid membrane. Its function is as follows. Component of the cytochrome b6-f complex, which mediates electron transfer between photosystem II (PSII) and photosystem I (PSI), cyclic electron flow around PSI, and state transitions. PetL is important for photoautotrophic growth as well as for electron transfer efficiency and stability of the cytochrome b6-f complex. This is Cytochrome b6-f complex subunit 6 from Helianthus annuus (Common sunflower).